A 213-amino-acid chain; its full sequence is Kynurenine formamidase (213 aa).

A substrate-binding site is contributed by Trp-18. Residues His-48, His-52, and Asp-54 each coordinate Zn(2+). The active-site Proton donor/acceptor is His-58. Zn(2+) contacts are provided by His-160 and Glu-172.

The protein belongs to the Cyclase 1 superfamily. KynB family. As to quaternary structure, homodimer. Zn(2+) serves as cofactor.

It catalyses the reaction N-formyl-L-kynurenine + H2O = L-kynurenine + formate + H(+). It participates in amino-acid degradation; L-tryptophan degradation via kynurenine pathway; L-kynurenine from L-tryptophan: step 2/2. Functionally, catalyzes the hydrolysis of N-formyl-L-kynurenine to L-kynurenine, the second step in the kynurenine pathway of tryptophan degradation. The protein is Kynurenine formamidase of Burkholderia pseudomallei (strain 1710b).